The primary structure comprises 425 residues: Inhibin beta A chain (425 aa).

Residues 1–20 form the signal peptide; sequence MPLLWLRGFLLASCWIIVRS. Residues 21-309 constitute a propeptide that is removed on maturation; it reads SPTPGSEGHS…EDHPHRRRRR (289 aa). Asn165 is a glycosylation site (N-linked (GlcNAc...) asparagine). Residues 260–289 form a disordered region; the sequence is KKRKEEEGEGKKRDGEGGAGGDEEKEQSHR. Over residues 263-275 the composition is skewed to basic and acidic residues; sequence KEEEGEGKKRDGE. 4 disulfide bridges follow: Cys313/Cys321, Cys320/Cys390, Cys349/Cys422, and Cys353/Cys424.

This sequence belongs to the TGF-beta family. Dimeric, linked by one or more disulfide bonds. Inhibin A is a dimer of alpha/INHA and beta-A/INHBA. Activin A is a homodimer of beta-A/INHBA. Activin AB is a dimer of beta-A/INHBA and beta-B/INHBB. Interacts with FST and FSTL3; these interactions prevent activin A interaction to its type II receptor. Activin A interacts with ACVR2A. Activin A interacts with BMPR2. Inhibin A interacts with ACVR1; this interaction creates a non-signaling complex (NSC) that inhibits ACVR1-mediated BMP signaling. Inhibin A interacts with ACVR2A.

It is found in the secreted. Functionally, inhibins/activins are involved in regulating a number of diverse functions such as hypothalamic and pituitary hormone secretion, gonadal hormone secretion, germ cell development and maturation, erythroid differentiation, insulin secretion, nerve cell survival, embryonic axial development or bone growth, depending on their subunit composition. Its function is as follows. Activin A is a homodimer of INHBA that plays a role in several essential biological processes including embryonic development, stem cell maintenance and differentiation, haematopoiesis, cell proliferation and tissue fibrosis. Signals through type I (such as ACVR1B or ACVR1C) and type II receptors (such as ACVR2A, ACVR2B or BMPR2) which, upon ligand binding, phosphorylate SMAD2 and SMAD3 intracellular signaling mediators that form a complex with SMAD4, translocate to the nucleus and modulate gene expression. Can also activate alternative non-canonical intracellular signaling pathways including the p38 MAPK, extracellular signal-regulated kinases 1/2 (ERK1/2) and c-Jun N-terminal kinases (JNKs) to modulate cell migration and differentiation. Alternatively, promotes osteoblastic differentiation via ACVRL1-SMAD1/5/9 pathway. In addition, can engage the type I receptor ACVR1 to form an ACVR1-activin A-type II receptor non-signaling complex (NSC) that renders receptors unavailable for engagement with BMPs, hence resulting in an apparent inhibition of ACVR1-mediated BMP signaling. Inhibin A is a dimer of alpha/INHA and beta-A/INHBA that functions as a feedback regulator in the hypothalamic-pituitary-gonadal (HPG) axis. Inhibits the secretion of FSH from the anterior pituitary gland by acting on pituitary gonadotrope cells. Antagonizes activin A by binding to the proteoglycan, betaglycan, and forming a stable complex with and, thereby, sequestering type II activin receptors while excluding type I receptor. This is Inhibin beta A chain (INHBA) from Ovis aries (Sheep).